The primary structure comprises 165 residues: Cyanate hydratase (165 aa).

Active-site residues include arginine 106, glutamate 109, and serine 132.

This sequence belongs to the cyanase family.

The catalysed reaction is cyanate + hydrogencarbonate + 3 H(+) = NH4(+) + 2 CO2. Its function is as follows. Catalyzes the reaction of cyanate with bicarbonate to produce ammonia and carbon dioxide. The chain is Cyanate hydratase from Laccaria bicolor (strain S238N-H82 / ATCC MYA-4686) (Bicoloured deceiver).